Here is a 205-residue protein sequence, read N- to C-terminus: MIGRLRGIILEKQPPQVLIEANGVGYEVHMPMTCFYELPELNQEAIIFTHFVVREDAQLLFGFNDKQERALFRELIKVNGVGPKLALAILSGMSATQFVSAVEREEIGALIKLPGVGKKTAERLVVEMKDRFKGLSGDLFNSVSDIPLTSPANVDNRVGEPEAEAAAALVALGYKPQEASRMISKIARPDADCETLIRDALRAAL.

The segment at 1-64 (MIGRLRGIIL…EDAQLLFGFN (64 aa)) is domain I. The segment at 65–143 (DKQERALFRE…GLSGDLFNSV (79 aa)) is domain II. Residues 144 to 156 (SDIPLTSPANVDN) form a flexible linker region. The tract at residues 157-205 (RVGEPEAEAAAALVALGYKPQEASRMISKIARPDADCETLIRDALRAAL) is domain III.

This sequence belongs to the RuvA family. As to quaternary structure, homotetramer. Forms an RuvA(8)-RuvB(12)-Holliday junction (HJ) complex. HJ DNA is sandwiched between 2 RuvA tetramers; dsDNA enters through RuvA and exits via RuvB. An RuvB hexamer assembles on each DNA strand where it exits the tetramer. Each RuvB hexamer is contacted by two RuvA subunits (via domain III) on 2 adjacent RuvB subunits; this complex drives branch migration. In the full resolvosome a probable DNA-RuvA(4)-RuvB(12)-RuvC(2) complex forms which resolves the HJ.

Its subcellular location is the cytoplasm. In terms of biological role, the RuvA-RuvB-RuvC complex processes Holliday junction (HJ) DNA during genetic recombination and DNA repair, while the RuvA-RuvB complex plays an important role in the rescue of blocked DNA replication forks via replication fork reversal (RFR). RuvA specifically binds to HJ cruciform DNA, conferring on it an open structure. The RuvB hexamer acts as an ATP-dependent pump, pulling dsDNA into and through the RuvAB complex. HJ branch migration allows RuvC to scan DNA until it finds its consensus sequence, where it cleaves and resolves the cruciform DNA. In Pectobacterium atrosepticum (strain SCRI 1043 / ATCC BAA-672) (Erwinia carotovora subsp. atroseptica), this protein is Holliday junction branch migration complex subunit RuvA.